The chain runs to 552 residues: Glutamine--tRNA ligase (552 aa).

The 'HIGH' region signature appears at 34–44 (PEPNGYLHIGH). ATP is bound by residues 35–37 (EPN) and 41–47 (HIGHAKS). 2 residues coordinate L-glutamine: aspartate 67 and tyrosine 212. Residues threonine 231, 261–262 (RL), and 269–271 (MSK) contribute to the ATP site. Positions 268–272 (VMSKR) match the 'KMSKS' region motif.

Belongs to the class-I aminoacyl-tRNA synthetase family. In terms of assembly, monomer.

It is found in the cytoplasm. The enzyme catalyses tRNA(Gln) + L-glutamine + ATP = L-glutaminyl-tRNA(Gln) + AMP + diphosphate. The chain is Glutamine--tRNA ligase from Aliivibrio fischeri (strain MJ11) (Vibrio fischeri).